The primary structure comprises 313 residues: GTPase Era (313 aa).

Positions 13-186 (RSGFVSFVGR…ADLLVGLLPE (174 aa)) constitute an Era-type G domain. A G1 region spans residues 21–28 (GRPNAGKS). A GTP-binding site is contributed by 21–28 (GRPNAGKS). Residues 47 to 51 (QTTRT) form a G2 region. Residues 68–71 (DTPG) form a G3 region. Residues 68–72 (DTPGL) and 131–134 (TKTD) each bind GTP. Residues 131-134 (TKTD) are G4. The G5 stretch occupies residues 165 to 167 (VSA). The KH type-2 domain maps to 217-299 (LRDELPHSVA…YLDLHVKIAK (83 aa)).

Belongs to the TRAFAC class TrmE-Era-EngA-EngB-Septin-like GTPase superfamily. Era GTPase family. As to quaternary structure, monomer.

The protein resides in the cytoplasm. The protein localises to the cell membrane. Functionally, an essential GTPase that binds both GDP and GTP, with rapid nucleotide exchange. Plays a role in 16S rRNA processing and 30S ribosomal subunit biogenesis and possibly also in cell cycle regulation and energy metabolism. In Nocardioides sp. (strain ATCC BAA-499 / JS614), this protein is GTPase Era.